A 673-amino-acid polypeptide reads, in one-letter code: tRNA uridine 5-carboxymethylaminomethyl modification enzyme MnmG (673 aa).

Position 17-22 (17-22 (GGGHAG)) interacts with FAD. 284–298 (GPRYCPSVEDKINRF) provides a ligand contact to NAD(+).

The protein belongs to the MnmG family. In terms of assembly, homodimer. Heterotetramer of two MnmE and two MnmG subunits. FAD serves as cofactor.

The protein resides in the cytoplasm. NAD-binding protein involved in the addition of a carboxymethylaminomethyl (cmnm) group at the wobble position (U34) of certain tRNAs, forming tRNA-cmnm(5)s(2)U34. This chain is tRNA uridine 5-carboxymethylaminomethyl modification enzyme MnmG, found in Polaromonas sp. (strain JS666 / ATCC BAA-500).